A 208-amino-acid chain; its full sequence is uncharacterized protein (208 aa).

Transmembrane regions (helical) follow at residues 5–25 (VIGI…KEAW), 41–61 (MLLI…IAAL), 69–89 (ANGI…LFFL), 123–143 (VLLG…ICGL), 150–170 (VFFF…TIAG), and 176–196 (NKLL…LVIY).

The protein resides in the cell membrane. This is an uncharacterized protein from Bacillus subtilis (strain 168).